Consider the following 267-residue polypeptide: Cell division control protein 11 (267 aa).

A Septin-type G domain is found at 6–263 (QNRRFTIMAA…ENYRAAVLEG (258 aa)). Positions 16 to 23 (GPRGSGKS) are G1 motif. GTP contacts are provided by residues 16-23 (GPRGSGKS), Gly66, 146-154 (KSDGLSITE), and Arg212. A G3 motif region spans residues 63–66 (DTPG). Positions 145–148 (SKSD) are G4 motif.

It belongs to the TRAFAC class TrmE-Era-EngA-EngB-Septin-like GTPase superfamily. Septin GTPase family. As to quaternary structure, component of the septin complex.

Septins are GTPases involved in cytokinesis. The septins localize to the site of cleavage and act as a structural scaffold that recruits different components involved in diverse processes at specific stages during the cell cycle. Septins are also involved in cell morphogenesis, chitin deposition, cell cycle regulation, cell compartmentalization and spore wall formation. The protein is Cell division control protein 11 (CDC11) of Encephalitozoon cuniculi (strain GB-M1) (Microsporidian parasite).